Reading from the N-terminus, the 246-residue chain is Ribonuclease PH (246 aa).

Phosphate contacts are provided by residues Arg-91 and 129 to 131; that span reads GTR.

Belongs to the RNase PH family. In terms of assembly, homohexameric ring arranged as a trimer of dimers.

The enzyme catalyses tRNA(n+1) + phosphate = tRNA(n) + a ribonucleoside 5'-diphosphate. Its function is as follows. Phosphorolytic 3'-5' exoribonuclease that plays an important role in tRNA 3'-end maturation. Removes nucleotide residues following the 3'-CCA terminus of tRNAs; can also add nucleotides to the ends of RNA molecules by using nucleoside diphosphates as substrates, but this may not be physiologically important. Probably plays a role in initiation of 16S rRNA degradation (leading to ribosome degradation) during starvation. The polypeptide is Ribonuclease PH (Paraburkholderia phymatum (strain DSM 17167 / CIP 108236 / LMG 21445 / STM815) (Burkholderia phymatum)).